The sequence spans 156 residues: Small ribosomal subunit protein uS7c (156 aa).

The protein belongs to the universal ribosomal protein uS7 family. In terms of assembly, part of the 30S ribosomal subunit.

The protein resides in the plastid. It is found in the chloroplast. Its function is as follows. One of the primary rRNA binding proteins, it binds directly to 16S rRNA where it nucleates assembly of the head domain of the 30S subunit. In Guillardia theta (Cryptophyte), this protein is Small ribosomal subunit protein uS7c (rps7).